The primary structure comprises 593 residues: Glutamyl-tRNA(Gln) amidotransferase subunit B, mitochondrial (593 aa).

The N-terminal 49 residues, 1–49, are a transit peptide targeting the mitochondrion; it reads MLRPWLRQSTRAARSLPCCQCPRPYSSRLPTLTSPSSSVRRLQTSASES. Positions 27–42 are enriched in low complexity; the sequence is SRLPTLTSPSSSVRRL. The segment at 27–80 is disordered; that stretch reads SRLPTLTSPSSSVRRLQTSASESQDRVPLRKQLKQNAKALKAEKRQRRESEEAS. Residues 66–80 show a composition bias toward basic and acidic residues; it reads LKAEKRQRRESEEAS.

Belongs to the GatB/GatE family. GatB subfamily. In terms of assembly, subunit of the heterotrimeric GatCAB amidotransferase (AdT) complex, composed of A, B and C subunits.

Its subcellular location is the mitochondrion. It catalyses the reaction L-glutamyl-tRNA(Gln) + L-glutamine + ATP + H2O = L-glutaminyl-tRNA(Gln) + L-glutamate + ADP + phosphate + H(+). Allows the formation of correctly charged Gln-tRNA(Gln) through the transamidation of misacylated Glu-tRNA(Gln) in the mitochondria. The reaction takes place in the presence of glutamine and ATP through an activated gamma-phospho-Glu-tRNA(Gln). This Aspergillus oryzae (strain ATCC 42149 / RIB 40) (Yellow koji mold) protein is Glutamyl-tRNA(Gln) amidotransferase subunit B, mitochondrial.